The sequence spans 76 residues: Sec-independent protein translocase protein TatA (76 aa).

Residues 1–21 (MGGLSIWHWLIVLLIVALVFG) traverse the membrane as a helical segment. The segment at 40-76 (KDGMKEGETPADAQQLPRSGAVDVNAKETTRSDSNKA) is disordered. A compositionally biased stretch (basic and acidic residues) spans 64 to 76 (NAKETTRSDSNKA).

This sequence belongs to the TatA/E family. As to quaternary structure, the Tat system comprises two distinct complexes: a TatABC complex, containing multiple copies of TatA, TatB and TatC subunits, and a separate TatA complex, containing only TatA subunits. Substrates initially bind to the TatABC complex, which probably triggers association of the separate TatA complex to form the active translocon.

The protein resides in the cell inner membrane. Functionally, part of the twin-arginine translocation (Tat) system that transports large folded proteins containing a characteristic twin-arginine motif in their signal peptide across membranes. TatA could form the protein-conducting channel of the Tat system. The polypeptide is Sec-independent protein translocase protein TatA (Burkholderia cenocepacia (strain HI2424)).